A 772-amino-acid polypeptide reads, in one-letter code: Ion-translocating oxidoreductase complex subunit C (772 aa).

4Fe-4S ferredoxin-type domains are found at residues 369 to 397 and 407 to 436; these read GEPQ…QQLY and KATT…VQYF. Residues Cys377, Cys380, Cys383, Cys387, Cys416, Cys419, Cys422, and Cys426 each contribute to the [4Fe-4S] cluster site. Residues 599–748 are disordered; that stretch reads KARKLEQQQA…EPEEQVDPRK (150 aa).

It belongs to the 4Fe4S bacterial-type ferredoxin family. RnfC subfamily. The complex is composed of six subunits: RsxA, RsxB, RsxC, RsxD, RsxE and RsxG. Requires [4Fe-4S] cluster as cofactor.

Its subcellular location is the cell inner membrane. Functionally, part of a membrane-bound complex that couples electron transfer with translocation of ions across the membrane. Required to maintain the reduced state of SoxR. In Shigella dysenteriae serotype 1 (strain Sd197), this protein is Ion-translocating oxidoreductase complex subunit C.